The sequence spans 258 residues: Type III pantothenate kinase (258 aa).

Residue 6 to 13 participates in ATP binding; it reads DVGNTNTV. Residues Y100 and 107-110 each bind substrate; that span reads GADR. D109 acts as the Proton acceptor in catalysis. Residue D129 coordinates K(+). T132 contributes to the ATP binding site. T184 lines the substrate pocket.

It belongs to the type III pantothenate kinase family. Homodimer. NH4(+) is required as a cofactor. K(+) serves as cofactor.

Its subcellular location is the cytoplasm. It catalyses the reaction (R)-pantothenate + ATP = (R)-4'-phosphopantothenate + ADP + H(+). Its pathway is cofactor biosynthesis; coenzyme A biosynthesis; CoA from (R)-pantothenate: step 1/5. With respect to regulation, not regulated by feedback inhibition by CoA and its thioesters as described for many other pantothenate kinases. Not inhibited by N-pentylpantothenamide (N5-Pan), and this compound cannot act as a substrate either. In terms of biological role, catalyzes the phosphorylation of pantothenate (Pan), the first step in CoA biosynthesis. Cannot utilize a phosphoryl donor other than ATP. This is Type III pantothenate kinase (coaX) from Bacillus subtilis (strain 168).